The sequence spans 132 residues: Small ribosomal subunit protein uS8 (132 aa).

The protein belongs to the universal ribosomal protein uS8 family. In terms of assembly, part of the 30S ribosomal subunit. Contacts proteins S5 and S12.

Its function is as follows. One of the primary rRNA binding proteins, it binds directly to 16S rRNA central domain where it helps coordinate assembly of the platform of the 30S subunit. The protein is Small ribosomal subunit protein uS8 of Xylella fastidiosa (strain M12).